The following is a 1401-amino-acid chain: DNA-directed RNA polymerase subunit beta' (1401 aa).

4 residues coordinate Zn(2+): Cys-71, Cys-73, Cys-86, and Cys-89. Mg(2+) is bound by residues Asp-462, Asp-464, and Asp-466. Residues Cys-810, Cys-884, Cys-891, and Cys-894 each coordinate Zn(2+). A disordered region spans residues 1378–1401; that stretch reads EKQATIVPSAPEPEPLALPTPEQS.

It belongs to the RNA polymerase beta' chain family. In terms of assembly, the RNAP catalytic core consists of 2 alpha, 1 beta, 1 beta' and 1 omega subunit. When a sigma factor is associated with the core the holoenzyme is formed, which can initiate transcription. Requires Mg(2+) as cofactor. Zn(2+) is required as a cofactor.

The catalysed reaction is RNA(n) + a ribonucleoside 5'-triphosphate = RNA(n+1) + diphosphate. DNA-dependent RNA polymerase catalyzes the transcription of DNA into RNA using the four ribonucleoside triphosphates as substrates. This chain is DNA-directed RNA polymerase subunit beta', found in Rhodopseudomonas palustris (strain BisB18).